The following is a 346-amino-acid chain: Tetraacyldisaccharide 4'-kinase (346 aa).

54–61 serves as a coordination point for ATP; sequence TVGGAGKT.

It belongs to the LpxK family.

It catalyses the reaction a lipid A disaccharide + ATP = a lipid IVA + ADP + H(+). It functions in the pathway glycolipid biosynthesis; lipid IV(A) biosynthesis; lipid IV(A) from (3R)-3-hydroxytetradecanoyl-[acyl-carrier-protein] and UDP-N-acetyl-alpha-D-glucosamine: step 6/6. In terms of biological role, transfers the gamma-phosphate of ATP to the 4'-position of a tetraacyldisaccharide 1-phosphate intermediate (termed DS-1-P) to form tetraacyldisaccharide 1,4'-bis-phosphate (lipid IVA). This chain is Tetraacyldisaccharide 4'-kinase, found in Sinorhizobium fredii (strain NBRC 101917 / NGR234).